A 165-amino-acid polypeptide reads, in one-letter code: Transcription antitermination protein NusB (165 aa).

Positions 1–20 (MSDVENGGEPRQPSVKPANQ) are disordered.

Belongs to the NusB family.

Its function is as follows. Involved in transcription antitermination. Required for transcription of ribosomal RNA (rRNA) genes. Binds specifically to the boxA antiterminator sequence of the ribosomal RNA (rrn) operons. In Agrobacterium fabrum (strain C58 / ATCC 33970) (Agrobacterium tumefaciens (strain C58)), this protein is Transcription antitermination protein NusB.